A 663-amino-acid chain; its full sequence is Probable methylenetetrahydrofolate reductase (NADPH) (663 aa).

The active-site Proton donor/acceptor is Glu76. Residues 76–81 (EFFPPR) and 107–108 (TW) contribute to the NAD(+) site. Position 107 is a phosphothreonine (Thr107). Residues 107-108 (TW), His141, 171-173 (RGD), 187-188 (RA), Tyr210, 214-217 (HPQA), Asp223, and Lys230 contribute to the FAD site. Residue Asp173 participates in substrate binding. Substrate is bound by residues Gln241, Tyr334, and Arg338. Ser408 is modified (phosphoserine). Thr465 is modified (phosphothreonine). Residues 477 to 480 (QPET), 497 to 501 (TVNSQ), Thr578, and Thr591 each bind S-adenosyl-L-methionine.

This sequence belongs to the methylenetetrahydrofolate reductase family. The cofactor is FAD.

It carries out the reaction (6S)-5-methyl-5,6,7,8-tetrahydrofolate + NADP(+) = (6R)-5,10-methylene-5,6,7,8-tetrahydrofolate + NADPH + H(+). It functions in the pathway one-carbon metabolism; tetrahydrofolate interconversion. The polypeptide is Probable methylenetetrahydrofolate reductase (NADPH) (Caenorhabditis elegans).